A 396-amino-acid chain; its full sequence is Potassium channel subfamily K member 9 (396 aa).

Residues Met1–Thr8 are Cytoplasmic-facing. A helical transmembrane segment spans residues Leu9–Leu29. Residues Glu30 to Ile88 lie on the Extracellular side of the membrane. Asn53 carries N-linked (GlcNAc...) asparagine glycosylation. Residues Thr89–Pro101 constitute an intramembrane region (pore-forming). K(+) is bound by residues Thr93, Ile94, Gly95, and Tyr96. The selectivity filter 1 stretch occupies residues Thr93–His98. Residues Gly102–Lys107 are Extracellular-facing. The chain crosses the membrane as a helical span at residues Ala108 to Leu128. Residues Gly129–Asn158 are Cytoplasmic-facing. Residues Met159 to Ser179 traverse the membrane as a helical segment. At Gln180–Phe194 the chain is on the extracellular side. The pore-forming intramembrane region spans Ile195–Ala207. Residues Thr199, Ile200, Gly201, and Phe202 each contribute to the K(+) site. Residues Thr199–Asp204 are selectivity filter 2. At Leu208–Pro218 the chain is on the extracellular side. The helical transmembrane segment at Phe219 to Leu239 threads the bilayer. The Cytoplasmic segment spans residues Asn240 to Ile396. The X-gate stretch occupies residues Val243 to Thr248.

Belongs to the two pore domain potassium channel (TC 1.A.1.8) family. Homodimer. Heterodimer with KCNK1. Heterodimer with KCNK3. As to expression, highly expressed in the CNS and at lower levels in the colon, kidney, liver, lung, spleen, stomach and skeletal muscle. The highest expression was found in the olfactory nuclei, piriform cortex, cerebellum, antedorsal thalmic nucleus, pontine nucleus, dorsal raphe and several nuclei in the medulla. Shows a non-homogeneous distribution in the hippocampus. Expressed at highest levels in the lateral posterior and inferior portions and at medium levels in neocortex. Expressed in motoneurons, including hypoglossal motoneurons (at protein level).

It localises to the cell membrane. The protein localises to the mitochondrion inner membrane. It is found in the cell projection. Its subcellular location is the dendrite. It catalyses the reaction K(+)(in) = K(+)(out). The catalysed reaction is Na(+)(in) = Na(+)(out). Activated by halothane and isoflurane. Inhibited by external acidification, diacylglycerol, anandamide and AGT/angiotensin II. Ruthenium red inhibits homomeric but not KCNK3:KCNK9 heteromeric channels. K(+) channel that conducts voltage-dependent outward rectifying currents upon membrane depolarization. Voltage sensing is coupled to K(+) electrochemical gradient in an 'ion flux gating' mode where outward but not inward ion flow opens the gate. Changes ion selectivity and becomes permeable to Na(+) ions in response to extracellular acidification. Protonation of the pH sensor His-98 stabilizes C-type inactivation conformation likely converting the channel from outward K(+)-conducting, to inward Na(+)-conducting to nonconductive state. Homo- and heterodimerizes to form functional channels with distinct regulatory and gating properties. Allows K(+) currents with fast-gating kinetics important for the repolarization and hyperpolarization phases of action potentials. In granule neurons, hyperpolarizes the resting membrane potential to limit intrinsic neuronal excitability, but once the action potential threshold is reached, supports high-frequency action potential firing and increased neuronal excitability. Homomeric and/or heteromeric KCNK3:KCNK9 channels operate in cerebellar granule cells, whereas heteromeric KCNK1:KCNK9 enables currents in hippocampal dentate gyrus granule neurons. Dispensable for central chemosensory respiration i.e. breathing controlled by brainstem CO2/pH, it rather conducts pH-sensitive currents and controls the firing rate of serotonergic raphe neurons involved in potentiation of the respiratory chemoreflex. In retinal ganglion cells, mediates outward rectifying currents that regulate action potentials in response to acidification of the synaptic cleft. Involved in transmission of image-forming and nonimage-forming visual information in the retina. In adrenal gland, contributes to the maintenance of a hyperpolarized resting membrane potential of aldosterone-producing cells at zona glomerulosa and limits aldosterone release as part of a regulatory mechanism that controls arterial blood pressure and electrolyte homeostasis. The chain is Potassium channel subfamily K member 9 from Rattus norvegicus (Rat).